A 983-amino-acid polypeptide reads, in one-letter code: Eukaryotic translation initiation factor 4E transporter (983 aa).

The interval 1–22 is disordered; sequence MEKSVAETENGDAFLELKKLPT. Ser-4 bears the Phosphoserine mark. Residues 29–35 carry the YXXXXLphi motif motif; it reads YTKEELL. A disordered region spans residues 40 to 99; that stretch reads RPYSKQRPSCLSEKYDSDGVWDPEKWHASLYPASGRSSPVESLKKESESDRPSLVRRIAD. Over residues 52-66 the composition is skewed to basic and acidic residues; sequence EKYDSDGVWDPEKWH. Phosphoserine occurs at positions 73 and 77. Basic and acidic residues predominate over residues 81–99; that stretch reads SLKKESESDRPSLVRRIAD. A phosphoserine mark is found at Ser-114, Ser-119, Ser-135, and Ser-137. The interval 130-160 is interaction with CSDE1; sequence VSSRRSGSPLEKDSDGLRLLGGRRIGSGRII. Positions 194–210 match the Nuclear localization signal motif; the sequence is RREFGDSKRVFGERRRN. Residues 206–229 are disordered; that stretch reads ERRRNDSYTEEEPEWFSAGPTSQS. The interaction with DDX6 stretch occupies residues 218–239; the sequence is PEWFSAGPTSQSETIELTGFDD. Phosphoserine is present on residues Ser-300, Ser-344, Ser-352, and Ser-373. Positions 341–360 are disordered; that stretch reads SNPSRSGSRSSSLGSTPHEE. The span at 344–355 shows a compositional bias: low complexity; sequence SRSGSRSSSLGS. Residue Lys-409 forms a Glycyl lysine isopeptide (Lys-Gly) (interchain with G-Cter in SUMO2) linkage. Position 416 is a phosphoserine (Ser-416). Positions 437–446 match the Nuclear export signal motif; the sequence is VEAGLKGLKV. Residues 447 to 489 form an interaction with LSM14A region; that stretch reads DQQMKNSTPFMAEHLEETLSAASSNRQLKKDGDMTAFNKLVNT. Lys-485 bears the N6-acetyllysine mark. Phosphoserine is present on residues Ser-563 and Ser-586. Disordered stretches follow at residues 585-616, 642-693, 708-800, and 906-951; these read PSPIGFPSGPQQLLGDPFQGMRKPMSPVSAQM, FYQP…MLSP, REKT…VPGT, and LHPP…SSPV. Positions 612 to 637 match the Nuclear export signal motif; it reads VSAQMSQLELQQAALEGLALPHDLAV. The segment covering 651 to 660 has biased composition (basic and acidic residues); the sequence is QVDRTRDGLR. Residue Ser-692 is modified to Phosphoserine. The interaction with PATL1 stretch occupies residues 694-712; sequence SFTPTSVIRKMYESREKTK. Positions 724–734 are enriched in basic and acidic residues; sequence DGKEDTQKTSE. 2 stretches are compositionally biased toward polar residues: residues 735–774 and 910–928; these read ENLLSSNPIPNTDQDSSTTNPKLSTLQRSSCSTPLSQTSR and GSSSQAAAISVQTPQNVPS. Phosphoserine is present on residues Ser-751, Ser-919, and Ser-949. Residues 938 to 983 form an interaction with LSM14A region; the sequence is QLEHRTSQRSSSPVGLAKWFGSDVLQQPLPSMPTKVISVDELEYRQ.

This sequence belongs to the 4E-T/EIF4E-T family. As to quaternary structure, interacts (via YXXXXLphi motif) with EIF4E. Interacts (via YXXXXLphi motif) with EIF4E2. Interacts with DDX6. Interacts with CSDE1/UNR. Interacts with CNOT1; promoting association with the CCR4-NOT complex. Interacts with LSM14A; promoting EIF4ENIF1 localization to P-bodies. Interacts with PATL1. Interacts with importin beta only in the presence of importin alpha, suggesting a direct interaction with importin alpha. Interacts with APOBEC3G in an RNA-dependent manner. Phosphorylation by MAPK8/JNK1 and or MAPK9/JNK2 in response to oxidative stress promotes P-body assembly. Phosphorylated during meiotic maturation. Highly expressed in developing oocytes.

The protein resides in the cytoplasm. The protein localises to the nucleus. It localises to the PML body. Its subcellular location is the nucleus speckle. In terms of biological role, EIF4E-binding protein that regulates translation and stability of mRNAs in processing bodies (P-bodies). Plays a key role in P-bodies to coordinate the storage of translationally inactive mRNAs in the cytoplasm and prevent their degradation. Acts as a binding platform for multiple RNA-binding proteins: promotes deadenylation of mRNAs via its interaction with the CCR4-NOT complex, and blocks decapping via interaction with eIF4E (EIF4E and EIF4E2), thereby protecting deadenylated and repressed mRNAs from degradation. Component of a multiprotein complex that sequesters and represses translation of proneurogenic factors during neurogenesis. Promotes miRNA-mediated translational repression. Involved in mRNA translational repression mediated by the miRNA effector TNRC6B by protecting TNRC6B-targeted mRNAs from decapping and subsequent decay. Required for the formation of P-bodies. Also acts as a nucleoplasmic shuttling protein, which mediates the nuclear import of EIF4E and DDX6 by a piggy-back mechanism. The polypeptide is Eukaryotic translation initiation factor 4E transporter (Mus musculus (Mouse)).